We begin with the raw amino-acid sequence, 463 residues long: Annexin A7 (463 aa).

Pro residues-rich tracts occupy residues 1–18 and 26–38; these read MSYP…PGYP and FPPP…PSGF. Disordered stretches follow at residues 1-54 and 71-153; these read MSYP…SSGY and GYPG…THGT. Positions 1–140 are repeat-rich region; that stretch reads MSYPGYPPTG…QYPGGQSPYP (140 aa). A 3 X 5 AA tandem repeats of G-Y-P-P-X region spans residues 5–20; sequence GYPPTGYPPFPGYPPT. Over residues 86–99 the composition is skewed to gly residues; it reads GGQGFGAPPGGAGF. Annexin repeat units follow at residues 160–231, 232–303, 315–387, and 391–462; these read FDAM…ALFM, PSTY…SMCQ, QLAQ…TILQ, and NRPA…AIVG. N6-acetyllysine is present on K208.

This sequence belongs to the annexin family. In terms of assembly, interacts with PDCD6.

Functionally, calcium/phospholipid-binding protein which promotes membrane fusion and is involved in exocytosis. The protein is Annexin A7 (ANXA7) of Bos taurus (Bovine).